Here is a 261-residue protein sequence, read N- to C-terminus: HLA class II histocompatibility antigen, DQ beta 1 chain (261 aa).

Positions 1 to 32 (MSWKKALRIPGGLRAATVTLMLAMLSTPVAEG) are cleaved as a signal peptide. The beta-1 stretch occupies residues 33–126 (RDSPEDFVYQ…LELRTTLQRR (94 aa)). The Extracellular portion of the chain corresponds to 33 to 230 (RDSPEDFVYQ…RAQSESAQSK (198 aa)). Disulfide bonds link C47–C111 and C149–C205. Residue N51 is glycosylated (N-linked (GlcNAc...) asparagine). A beta-2 region spans residues 127-220 (VEPTVTISPS…SLQNPITVEW (94 aa)). One can recognise an Ig-like C1-type domain in the interval 129–217 (PTVTISPSRT…EHPSLQNPIT (89 aa)). The interval 221–230 (RAQSESAQSK) is connecting peptide. Residues 231 to 251 (MLSGIGGFVLGLIFLGLGLII) traverse the membrane as a helical segment. Topologically, residues 252-261 (HHRSQKGLLH) are cytoplasmic.

This sequence belongs to the MHC class II family. Heterodimer of an alpha and a beta subunit; also referred as MHC class II molecule. In the endoplasmic reticulum (ER) it forms a heterononamer; 3 MHC class II molecules bind to a CD74 homotrimer (also known as invariant chain or HLA class II histocompatibility antigen gamma chain). In the endosomal/lysosomal system; CD74 undergoes sequential degradation by various proteases; leaving a small fragment termed CLIP on each MHC class II molecule. MHC class II molecule interacts with HLA_DM, and HLA_DO in B-cells, in order to release CLIP and facilitate the binding of antigenic peptides.

The protein resides in the cell membrane. The protein localises to the endoplasmic reticulum membrane. It is found in the golgi apparatus. It localises to the trans-Golgi network membrane. Its subcellular location is the endosome membrane. The protein resides in the lysosome membrane. In terms of biological role, binds peptides derived from antigens that access the endocytic route of antigen presenting cells (APC) and presents them on the cell surface for recognition by the CD4 T-cells. The peptide binding cleft accommodates peptides of 10-30 residues. The peptides presented by MHC class II molecules are generated mostly by degradation of proteins that access the endocytic route, where they are processed by lysosomal proteases and other hydrolases. Exogenous antigens that have been endocytosed by the APC are thus readily available for presentation via MHC II molecules, and for this reason this antigen presentation pathway is usually referred to as exogenous. As membrane proteins on their way to degradation in lysosomes as part of their normal turn-over are also contained in the endosomal/lysosomal compartments, exogenous antigens must compete with those derived from endogenous components. Autophagy is also a source of endogenous peptides, autophagosomes constitutively fuse with MHC class II loading compartments. In addition to APCs, other cells of the gastrointestinal tract, such as epithelial cells, express MHC class II molecules and CD74 and act as APCs, which is an unusual trait of the GI tract. To produce a MHC class II molecule that presents an antigen, three MHC class II molecules (heterodimers of an alpha and a beta chain) associate with a CD74 trimer in the ER to form a heterononamer. Soon after the entry of this complex into the endosomal/lysosomal system where antigen processing occurs, CD74 undergoes a sequential degradation by various proteases, including CTSS and CTSL, leaving a small fragment termed CLIP (class-II-associated invariant chain peptide). The removal of CLIP is facilitated by HLA-DM via direct binding to the alpha-beta-CLIP complex so that CLIP is released. HLA-DM stabilizes MHC class II molecules until primary high affinity antigenic peptides are bound. The MHC II molecule bound to a peptide is then transported to the cell membrane surface. In B-cells, the interaction between HLA-DM and MHC class II molecules is regulated by HLA-DO. Primary dendritic cells (DCs) also to express HLA-DO. Lysosomal microenvironment has been implicated in the regulation of antigen loading into MHC II molecules, increased acidification produces increased proteolysis and efficient peptide loading. This chain is HLA class II histocompatibility antigen, DQ beta 1 chain (HLA-DQB1), found in Homo sapiens (Human).